The primary structure comprises 403 residues: F-box/kelch-repeat protein At5g43190 (403 aa).

Residues Pro-45 to His-91 enclose the F-box domain. 4 Kelch repeats span residues His-91–Ser-140, Lys-192–Asn-240, Ile-291–His-339, and His-343–Phe-393.

The chain is F-box/kelch-repeat protein At5g43190 from Arabidopsis thaliana (Mouse-ear cress).